We begin with the raw amino-acid sequence, 475 residues long: MNLQENSSQQLKRTMKSRHLFMISLGGVIGTGLFLSTGYTLHQAGPGGTILAYVIGGLMMYLVMQCLGELSVAMPVTGSFQKYATTFIGPSTGFMVGIMYWINWVVTVGSEFTASGILMQRWFPDSSVWMWSAIFAALLFICNAFSVKLFAETEFWFSSVKIVTIILFIILGGAAMFGLISLNGTADAPMLSNFTDHGGLFPNGFLAVFIAMISVSFAFSGTELIGVTAGESANPQKDIPRSIRNVAWRTVIFFIGAVFILSGLISWKDAGVIESPFVAVFAEIGIPYAADIMNFVILTALLSVANSGLYASTRMMWSLANENMISSRFKKVTSKGIPLNALMISMAVSCLSLVSSIVAPGTVYVVMVAIAGFAGVVVWMSIALSQLLFRKRFLKKGGDVKDLTFRTPLYPLMPIAALLLCSASCIGLAFDPNQRIALFCGVPCIILCYLIYHFKRNVTKAKKISQEEYPADHIL.

12 consecutive transmembrane segments (helical) span residues 20–40 (LFMISLGGVIGTGLFLSTGYT), 44–64 (AGPGGTILAYVIGGLMMYLVM), 87–107 (FIGPSTGFMVGIMYWINWVVT), 127–147 (SVWMWSAIFAALLFICNAFSV), 162–182 (IVTIILFIILGGAAMFGLISL), 199–219 (GLFPNGFLAVFIAMISVSFAF), 246–266 (VAWRTVIFFIGAVFILSGLIS), 277–297 (FVAVFAEIGIPYAADIMNFVI), 341–361 (ALMISMAVSCLSLVSSIVAPG), 363–383 (VYVVMVAIAGFAGVVVWMSIA), 410–430 (YPLMPIAALLLCSASCIGLAF), and 434–454 (QRIALFCGVPCIILCYLIYHF).

It belongs to the amino acid-polyamine-organocation (APC) superfamily.

The protein resides in the cell membrane. This Bacillus subtilis (strain 168) protein is Putative histidine permease (hutM).